A 506-amino-acid chain; its full sequence is Cobyric acid synthase (506 aa).

The GATase cobBQ-type domain occupies 260–453; the sequence is KVGVAAIYFP…FHGIFNEPAV (194 aa). The Nucleophile role is filled by Cys-341. His-445 is a catalytic residue.

It belongs to the CobB/CobQ family. CobQ subfamily.

Its pathway is cofactor biosynthesis; adenosylcobalamin biosynthesis. Its function is as follows. Catalyzes amidations at positions B, D, E, and G on adenosylcobyrinic A,C-diamide. NH(2) groups are provided by glutamine, and one molecule of ATP is hydrogenolyzed for each amidation. In Chlorobium chlorochromatii (strain CaD3), this protein is Cobyric acid synthase.